We begin with the raw amino-acid sequence, 248 residues long: tRNA (guanine-N(1)-)-methyltransferase (248 aa).

Residues glycine 113 and valine 133–leucine 138 contribute to the S-adenosyl-L-methionine site.

The protein belongs to the RNA methyltransferase TrmD family. In terms of assembly, homodimer.

The protein localises to the cytoplasm. It carries out the reaction guanosine(37) in tRNA + S-adenosyl-L-methionine = N(1)-methylguanosine(37) in tRNA + S-adenosyl-L-homocysteine + H(+). Its function is as follows. Specifically methylates guanosine-37 in various tRNAs. In Shewanella sp. (strain W3-18-1), this protein is tRNA (guanine-N(1)-)-methyltransferase.